The following is a 673-amino-acid chain: Cell division cycle protein 23 homolog (673 aa).

TPR repeat units lie at residues Ala86–Asn120, Asn159–His195, Glu232–Ile267, Pro332–Arg365, Trp400–Leu433, Ala434–Asp467, Arg469–Asp501, Ser502–Glu535, Leu539–Ala572, and Ile577–Cys610. The interval Ser628–Phe673 is disordered. Low complexity predominate over residues Ala635–Gly646. Positions Met650–Phe673 are enriched in acidic residues.

The protein belongs to the APC8/CDC23 family. The APC/C complex is probably composed of at least 12 subunits: apc-2, apc-10, apc-11, cdc-26, emb-1, emb-27, emb-30, mat-1, mat-2, mat-3, such-1 and gfi-3.

The protein operates within protein modification; protein ubiquitination. Its function is as follows. Probable component of the anaphase promoting complex/cyclosome (APC/C), a cell cycle-regulated E3 ubiquitin ligase that controls progression through mitosis and the G1 phase of the cell cycle. The APC/C complex acts by mediating ubiquitination and subsequent degradation of target proteins. Developmental role in early embryogenesis and the metaphase to anaphase transition in oocyte and spermatocyte meiosis and mitosis in germ cells. Required for embryonic anterior-posterior axis formation. Plays a role in regulating the abundance of glr-1 receptors in postmitotic neurons, which may in turn control animal locomotion. Involved in regulating GABA neurotransmitter release at neuromuscular junctions in GABA motor neurons. This is Cell division cycle protein 23 homolog from Caenorhabditis elegans.